The primary structure comprises 304 residues: tRNA U34 carboxymethyltransferase (304 aa).

Carboxy-S-adenosyl-L-methionine is bound by residues Lys73, Trp87, Lys92, Gly111, 133–135 (DPS), 160–161 (VE), Tyr180, and Arg295.

Belongs to the class I-like SAM-binding methyltransferase superfamily. CmoB family. In terms of assembly, homotetramer.

It carries out the reaction carboxy-S-adenosyl-L-methionine + 5-hydroxyuridine(34) in tRNA = 5-carboxymethoxyuridine(34) in tRNA + S-adenosyl-L-homocysteine + H(+). Catalyzes carboxymethyl transfer from carboxy-S-adenosyl-L-methionine (Cx-SAM) to 5-hydroxyuridine (ho5U) to form 5-carboxymethoxyuridine (cmo5U) at position 34 in tRNAs. In Aliarcobacter butzleri (strain RM4018) (Arcobacter butzleri), this protein is tRNA U34 carboxymethyltransferase.